Reading from the N-terminus, the 1454-residue chain is Probable cleavage and polyadenylation specificity factor subunit 1 (1454 aa).

The interval 810 to 843 (EEKEKKAKQTAAQEKEKETEKKKDDAKNEEDQVN) is disordered. A compositionally biased stretch (basic and acidic residues) spans 812-843 (KEKKAKQTAAQEKEKETEKKKDDAKNEEDQVN).

Belongs to the CPSF1 family. As to quaternary structure, CPSF is a heterotetramer composed of four distinct subunits 160 (cpsf-1), 100 (cpsf-2), 70 (cpsf-3), and 30 kDa (cpsf-4).

It is found in the nucleus. In terms of biological role, CPSF plays a key role in pre-mRNA 3'-end formation, recognizing the AAUAAA signal sequence and interacting with poly(A)polymerase and other factors to bring about cleavage and poly(A) addition. This subunit is involved in the RNA recognition step of the polyadenylation reaction. This Caenorhabditis briggsae protein is Probable cleavage and polyadenylation specificity factor subunit 1.